The sequence spans 242 residues: Small ribosomal subunit protein uS2 (242 aa).

The protein belongs to the universal ribosomal protein uS2 family.

This chain is Small ribosomal subunit protein uS2, found in Shewanella denitrificans (strain OS217 / ATCC BAA-1090 / DSM 15013).